The chain runs to 433 residues: Dihydroorotase (433 aa).

Zn(2+) contacts are provided by histidine 63 and histidine 65. Residues 65-67 (HLR) and asparagine 97 contribute to the substrate site. 3 residues coordinate Zn(2+): aspartate 155, histidine 182, and histidine 235. A substrate-binding site is contributed by asparagine 283. Aspartate 310 contributes to the Zn(2+) binding site. Aspartate 310 is a catalytic residue. Substrate is bound at residue histidine 314.

It belongs to the metallo-dependent hydrolases superfamily. DHOase family. Class I DHOase subfamily. Zn(2+) serves as cofactor.

The enzyme catalyses (S)-dihydroorotate + H2O = N-carbamoyl-L-aspartate + H(+). It participates in pyrimidine metabolism; UMP biosynthesis via de novo pathway; (S)-dihydroorotate from bicarbonate: step 3/3. In terms of biological role, catalyzes the reversible cyclization of carbamoyl aspartate to dihydroorotate. The polypeptide is Dihydroorotase (Anaeromyxobacter sp. (strain K)).